The sequence spans 257 residues: Ribonuclease HII (257 aa).

Positions 72 to 257 (TYIAGIDEVG…FAPIKDMIQK (186 aa)) constitute an RNase H type-2 domain. 3 residues coordinate a divalent metal cation: Asp-78, Glu-79, and Asp-170.

Belongs to the RNase HII family. Mn(2+) is required as a cofactor. It depends on Mg(2+) as a cofactor.

Its subcellular location is the cytoplasm. The catalysed reaction is Endonucleolytic cleavage to 5'-phosphomonoester.. Endonuclease that specifically degrades the RNA of RNA-DNA hybrids. This is Ribonuclease HII from Bacillus thuringiensis (strain Al Hakam).